We begin with the raw amino-acid sequence, 281 residues long: Protein EMBRYO DEFECTIVE 1674 (281 aa).

Polar residues-rich tracts occupy residues 1–14 (MTTT…QSLS) and 24–41 (PNTS…PNSS). Positions 1–47 (MTTTRAKSKFQSLSACRFTPLPEPNTSPSTYSKTLPKPNSSPGTDGT) are disordered. Residues 66–153 (VTLSDWWLTK…LGFPYDWEDY (88 aa)) form the SANTA domain.

In terms of biological role, required for normal embryo development. The sequence is that of Protein EMBRYO DEFECTIVE 1674 from Arabidopsis thaliana (Mouse-ear cress).